The primary structure comprises 233 residues: Flagellar calcium-binding protein TB-17 (233 aa).

The segment covering 1-11 has biased composition (polar residues); that stretch reads MGCSGSKNASN. The segment at 1–29 is disordered; sequence MGCSGSKNASNPKDGAASKGGKDGKTTAD. The segment covering 20–29 has biased composition (basic and acidic residues); it reads GGKDGKTTAD. EF-hand domains are found at residues 48-83, 130-165, and 167-202; these read ESKS…ILKL, YDIF…LKEW, and VDIT…KKLQ. Positions 61, 63, 65, 67, 72, 143, 145, 147, 154, 180, 182, 184, and 191 each coordinate Ca(2+). The interval 203–233 is disordered; sequence VSGDPDDEENGANEGDGANAGDGVPAAEGSA. Positions 214–225 are enriched in low complexity; it reads ANEGDGANAGDG.

The protein belongs to the calflagin family.

It localises to the cell projection. The protein resides in the cilium. It is found in the flagellum. May contribute to the rapid motility of the trypanosomes, playing a role either in flagellar structure or in calcium metabolism. Could alternate between a GDP-bound inactive form to a calcium/GTP-bound active form. This is Flagellar calcium-binding protein TB-17 (FCABP) from Trypanosoma brucei brucei.